The sequence spans 566 residues: UvrABC system protein C (566 aa).

The 78-residue stretch at 16–93 (EKPGVYLFKK…IQQYKPRYNV (78 aa)) folds into the GIY-YIG domain. In terms of domain architecture, UVR spans 199–234 (AEVLPKLYEKIEEFSKELMFEKCAHIRDQIIALENL).

The protein belongs to the UvrC family. As to quaternary structure, interacts with UvrB in an incision complex.

Its subcellular location is the cytoplasm. The UvrABC repair system catalyzes the recognition and processing of DNA lesions. UvrC both incises the 5' and 3' sides of the lesion. The N-terminal half is responsible for the 3' incision and the C-terminal half is responsible for the 5' incision. The protein is UvrABC system protein C of Aquifex aeolicus (strain VF5).